The chain runs to 101 residues: Small ribosomal subunit protein bS18c (101 aa).

This sequence belongs to the bacterial ribosomal protein bS18 family. In terms of assembly, part of the 30S ribosomal subunit.

The protein resides in the plastid. It is found in the chloroplast. This chain is Small ribosomal subunit protein bS18c, found in Lepidium virginicum (Virginia pepperweed).